Consider the following 201-residue polypeptide: Recombination protein RecR (201 aa).

The segment at 57–72 (CCDCRTFTEEERCTIC) adopts a C4-type zinc-finger fold. Positions 81–176 (GQICVVESPA…AASRIAHGVP (96 aa)) constitute a Toprim domain.

This sequence belongs to the RecR family.

Its function is as follows. May play a role in DNA repair. It seems to be involved in an RecBC-independent recombinational process of DNA repair. It may act with RecF and RecO. This is Recombination protein RecR from Proteus mirabilis (strain HI4320).